The chain runs to 251 residues: Hydroxyacylglutathione hydrolase (251 aa).

Zn(2+) contacts are provided by His53, His55, Asp57, His58, His110, Asp127, and His165.

It belongs to the metallo-beta-lactamase superfamily. Glyoxalase II family. Monomer. It depends on Zn(2+) as a cofactor.

The catalysed reaction is an S-(2-hydroxyacyl)glutathione + H2O = a 2-hydroxy carboxylate + glutathione + H(+). The protein operates within secondary metabolite metabolism; methylglyoxal degradation; (R)-lactate from methylglyoxal: step 2/2. Functionally, thiolesterase that catalyzes the hydrolysis of S-D-lactoyl-glutathione to form glutathione and D-lactic acid. The sequence is that of Hydroxyacylglutathione hydrolase from Salmonella paratyphi C (strain RKS4594).